The sequence spans 436 residues: Putative permease MJ0326 (436 aa).

The next 12 helical transmembrane spans lie at 24-44 (LAGI…PQIL), 51-71 (FGAV…VMGL), 79-99 (LAPG…GMGI), 103-123 (VALG…LTKI), 139-159 (TAVG…GIIV), 171-191 (LMEP…ILVS), 194-214 (VIGA…ILGI), 235-255 (LDIM…FFFV), 322-342 (GFVS…YPVV), 345-365 (IPPY…MRSV), 381-401 (ITLL…LGFI), and 416-436 (VHWL…YLSG).

This sequence belongs to the nucleobase:cation symporter-2 (NCS2) (TC 2.A.40) family. Azg-like subfamily.

It is found in the cell membrane. The polypeptide is Putative permease MJ0326 (Methanocaldococcus jannaschii (strain ATCC 43067 / DSM 2661 / JAL-1 / JCM 10045 / NBRC 100440) (Methanococcus jannaschii)).